A 229-amino-acid chain; its full sequence is Putative N-acetylmannosamine-6-phosphate 2-epimerase 2 (229 aa).

Belongs to the NanE family.

It carries out the reaction an N-acyl-D-glucosamine 6-phosphate = an N-acyl-D-mannosamine 6-phosphate. The protein operates within amino-sugar metabolism; N-acetylneuraminate degradation; D-fructose 6-phosphate from N-acetylneuraminate: step 3/5. Its function is as follows. Converts N-acetylmannosamine-6-phosphate (ManNAc-6-P) to N-acetylglucosamine-6-phosphate (GlcNAc-6-P). The sequence is that of Putative N-acetylmannosamine-6-phosphate 2-epimerase 2 (nanE2) from Salmonella typhimurium (strain LT2 / SGSC1412 / ATCC 700720).